We begin with the raw amino-acid sequence, 282 residues long: Protease HtpX homolog (282 aa).

The next 2 membrane-spanning stretches (helical) occupy residues 6–26 (TFIL…LIGG) and 28–48 (QGVI…YFFS). Position 130 (His-130) interacts with Zn(2+). Glu-131 is an active-site residue. Residue His-134 participates in Zn(2+) binding. The next 2 membrane-spanning stretches (helical) occupy residues 140-160 (ILIG…ANFA) and 177-197 (ILMI…QMAI). A Zn(2+)-binding site is contributed by Glu-202.

This sequence belongs to the peptidase M48B family. It depends on Zn(2+) as a cofactor.

Its subcellular location is the cell inner membrane. This chain is Protease HtpX homolog, found in Campylobacter hominis (strain ATCC BAA-381 / DSM 21671 / CCUG 45161 / LMG 19568 / NCTC 13146 / CH001A).